A 197-amino-acid polypeptide reads, in one-letter code: MSSVTLVAKSKLPTPWGTFTLVGFQETGTGKDHAALVMGDITGDEPVLGRIHSECLTGDALFSLRCDCGFQLQAALENIAKAGRGVLLYVRQEGRGIGLLNKIRAYHLQDQGADTVEANVALGFAADMRDYTICADMLKQLEVKSLKLMTNNPRKMKAMESFGIPVAERVPLQEGRNPHNEFYLSTKANKLDHMFKK.

50-54 (RIHSE) contacts GTP. Positions 55, 66, and 68 each coordinate Zn(2+). Residues Gln-71, 93–95 (EGR), and Thr-115 each bind GTP. Residue Asp-127 is the Proton acceptor of the active site. Arg-129 serves as the catalytic Nucleophile. Thr-150 and Lys-155 together coordinate GTP.

The protein belongs to the GTP cyclohydrolase II family. Zn(2+) is required as a cofactor.

It catalyses the reaction GTP + 4 H2O = 2,5-diamino-6-hydroxy-4-(5-phosphoribosylamino)-pyrimidine + formate + 2 phosphate + 3 H(+). Its pathway is cofactor biosynthesis; riboflavin biosynthesis; 5-amino-6-(D-ribitylamino)uracil from GTP: step 1/4. Its function is as follows. Catalyzes the conversion of GTP to 2,5-diamino-6-ribosylamino-4(3H)-pyrimidinone 5'-phosphate (DARP), formate and pyrophosphate. In Aeromonas hydrophila subsp. hydrophila (strain ATCC 7966 / DSM 30187 / BCRC 13018 / CCUG 14551 / JCM 1027 / KCTC 2358 / NCIMB 9240 / NCTC 8049), this protein is GTP cyclohydrolase-2.